An 87-amino-acid chain; its full sequence is Kappa 1b-bungarotoxin (87 aa).

An N-terminal signal peptide occupies residues 1-21 (MKTLLLTLVVVTIVCLDLGYT). 5 disulfide bridges follow: cysteine 24–cysteine 42, cysteine 35–cysteine 63, cysteine 48–cysteine 52, cysteine 67–cysteine 79, and cysteine 80–cysteine 85.

This sequence belongs to the three-finger toxin family. Long-chain subfamily. Kappa-neurotoxin sub-subfamily. As to quaternary structure, homo- and heterodimer; non-covalently linked. As to expression, expressed by the venom gland.

Its subcellular location is the secreted. In terms of biological role, postsynaptic neurotoxin that binds and inhibits neuronal nicotinic acetylcholine receptors (nAChR) with high affinity (IC(50)&lt;100 nM). Is a selective, and slowly reversible antagonist of alpha-3/CHRNA3-containing and some alpha-4/CHRNA4-containing AChRs. This chain is Kappa 1b-bungarotoxin, found in Bungarus candidus (Malayan krait).